A 323-amino-acid chain; its full sequence is o-succinylbenzoate synthase (323 aa).

Lys134 (proton donor) is an active-site residue. Mg(2+)-binding residues include Asp162, Glu191, and Asp214. The active-site Proton acceptor is the Lys236.

It belongs to the mandelate racemase/muconate lactonizing enzyme family. MenC type 1 subfamily. Requires a divalent metal cation as cofactor.

It catalyses the reaction (1R,6R)-6-hydroxy-2-succinyl-cyclohexa-2,4-diene-1-carboxylate = 2-succinylbenzoate + H2O. Its pathway is quinol/quinone metabolism; 1,4-dihydroxy-2-naphthoate biosynthesis; 1,4-dihydroxy-2-naphthoate from chorismate: step 4/7. The protein operates within quinol/quinone metabolism; menaquinone biosynthesis. In terms of biological role, converts 2-succinyl-6-hydroxy-2,4-cyclohexadiene-1-carboxylate (SHCHC) to 2-succinylbenzoate (OSB). This Edwardsiella ictaluri (strain 93-146) protein is o-succinylbenzoate synthase.